Consider the following 185-residue polypeptide: Ribosome-recycling factor (185 aa).

The protein belongs to the RRF family.

The protein localises to the cytoplasm. Functionally, responsible for the release of ribosomes from messenger RNA at the termination of protein biosynthesis. May increase the efficiency of translation by recycling ribosomes from one round of translation to another. This Actinobacillus pleuropneumoniae serotype 5b (strain L20) protein is Ribosome-recycling factor.